Consider the following 354-residue polypeptide: Sorbitol dehydrogenase (354 aa).

A Zn(2+)-binding site is contributed by Cys43. Tyr49 serves as a coordination point for substrate. Zn(2+)-binding residues include His67 and Glu68. Glu153 is a substrate binding site. 3 residues coordinate NAD(+): Ile181, Asp201, and Arg206. Residues Ser208 and Ser222 each carry the phosphoserine modification. Residues 270–272 and 294–296 each bind NAD(+); these read VGL and VFR. Positions 296 and 297 each coordinate substrate.

The protein belongs to the zinc-containing alcohol dehydrogenase family. As to quaternary structure, homotetramer. The cofactor is Zn(2+). As to expression, expressed in liver.

The protein resides in the mitochondrion membrane. The protein localises to the cell projection. It is found in the cilium. It localises to the flagellum. The enzyme catalyses xylitol + NAD(+) = D-xylulose + NADH + H(+). The catalysed reaction is L-iditol + NAD(+) = keto-L-sorbose + NADH + H(+). It catalyses the reaction keto-D-fructose + NADH + H(+) = D-sorbitol + NAD(+). In terms of biological role, polyol dehydrogenase that catalyzes the reversible NAD(+)-dependent oxidation of various sugar alcohols. Is mostly active with xylitol, L-iditol and D-sorbitol (D-glucitol) as substrates, leading to the C2-oxidized products D-xylulose, L-sorbose and D-fructose, respectively. Is a key enzyme in the polyol pathway that interconverts glucose and fructose via sorbitol, which constitutes an important alternate route for glucose metabolism. May play a role in sperm motility by using sorbitol as an alternative energy source for sperm motility. This Ovis aries (Sheep) protein is Sorbitol dehydrogenase (SORD).